The sequence spans 758 residues: Spastin (758 aa).

Positions 1–103 are disordered; that stretch reads MVRTKNQSSS…SPRSGHHHSY (103 aa). Over 1-121 the chain is Cytoplasmic; sequence MVRTKNQSSS…KQNLYVVSFP (121 aa). Positions 1–210 are required for localization to punctate cytoplasmic foci; that stretch reads MVRTKNQSSS…RPIQPLEMAA (210 aa). Low complexity-rich tracts occupy residues 8–28, 43–58, 66–76, and 85–95; these read SSSS…SSGA, RSSS…AGGS, SSNRRSPGSSP, and TDDLTPTTCSP. An intramembrane region (helical) is located at residues 122–142; that stretch reads IIFLFNVLRSLIYQLFCIFRY. Residues 143-758 lie on the Cytoplasmic side of the membrane; that stretch reads LYGASTKVIY…WSQDYGDITI (616 aa). Composition is skewed to polar residues over residues 169–180 and 189–198; these read SKEQQQSLNHPS and QEQQLSNQPQ. The tract at residues 169 to 202 is disordered; it reads SKEQQQSLNHPSELNREGDGQEQQLSNQPQRFRP. Residues 208–758 form a sufficient for interaction with microtubules and microtubule severing region; that stretch reads MAANRPGGGY…WSQDYGDITI (551 aa). In terms of domain architecture, MIT spans 233 to 308; it reads HRRAFEYISK…SMARDRLHFL (76 aa). The tract at residues 353–454 is disordered; that stretch reads RVRSSGYGPK…GPSGSGASTP (102 aa). Composition is skewed to polar residues over residues 390–406 and 425–454; these read NKSQ…TSVG and QFSS…ASTP. Residues 443 to 455 form a required for interaction with microtubules region; sequence NNGPSGSGASTPV. 523–530 contributes to the ATP binding site; sequence GPPGNGKT.

It belongs to the AAA ATPase family. Spastin subfamily. Homohexamer. The homohexamer is stabilized by ATP-binding. The homohexamer may adopt a ring conformation through which microtubules pass prior to being severed. Interacts with microtubules. Interacts with atl; may be involved in microtubule dynamics.

The protein resides in the membrane. It is found in the cytoplasm. It localises to the cytoskeleton. Its subcellular location is the microtubule organizing center. The protein localises to the centrosome. The protein resides in the chromosome. It is found in the lipid droplet. The enzyme catalyses n ATP + n H2O + a microtubule = n ADP + n phosphate + (n+1) alpha/beta tubulin heterodimers.. Its function is as follows. ATP-dependent microtubule severing protein. Stimulates microtubule minus-end depolymerization and poleward microtubule flux in the mitotic spindle. Regulates microtubule stability in the neuromuscular junction synapse. Involved in lipid metabolism by regulating the size and distribution of lipid droplets. Involved in axon regeneration by regulating microtubule severing. This is Spastin from Drosophila sechellia (Fruit fly).